Consider the following 452-residue polypeptide: NADH-cytochrome b5 reductase-like protein alnC (452 aa).

In terms of domain architecture, Cytochrome b5 heme-binding spans 4–80 (PASITLAEVA…LKTLLVGSLQ (77 aa)). Residue 33–38 (AEYRED) coordinates FMN. His39 and His63 together coordinate heme. FMN contacts are provided by residues 80 to 83 (QSKT) and 116 to 125 (NDTSKYGQLP). 2 helical membrane-spanning segments follow: residues 120-140 (KYGQ…FFTL) and 166-186 (VGFL…ATFV). An FAD-binding FR-type domain is found at 225–324 (NTQQFLTLVD…RGPFGRYSPS (100 aa)). An FAD-binding site is contributed by 302-305 (YLLN). NADP(+) contacts are provided by residues 389 to 390 (GQ) and 395 to 399 (WKGLR).

Belongs to the flavoprotein pyridine nucleotide cytochrome reductase family. FAD serves as cofactor. It depends on FMN as a cofactor.

It is found in the membrane. It participates in polyketide biosynthesis. Functionally, NADH-cytochrome b5 reductase-like protein; part of the gene cluster that mediates the biosynthesis of asperlin, a polyketide showing anti-inflammatory, antitumor and antibiotic activities. The first step of the asperlin biosynthesis is the production of the intermediate 2,4,6-octatrienoic acid by the highly redusing polyketide synthase alnA with cleavage of the PKS product by the esterase alnB. 2,4,6-octatrienoic acid is further converted to asperlin via several steps involving the remaining enzymes from the cluster. The protein is NADH-cytochrome b5 reductase-like protein alnC of Emericella nidulans (strain FGSC A4 / ATCC 38163 / CBS 112.46 / NRRL 194 / M139) (Aspergillus nidulans).